The chain runs to 269 residues: 4-hydroxy-tetrahydrodipicolinate reductase (269 aa).

NAD(+) is bound by residues G9–M14, D35, G102–T104, and A128–F131. H158 (proton donor/acceptor) is an active-site residue. Residue H159 coordinates (S)-2,3,4,5-tetrahydrodipicolinate. K162 (proton donor) is an active-site residue. Residue G168–T169 participates in (S)-2,3,4,5-tetrahydrodipicolinate binding.

This sequence belongs to the DapB family.

The protein localises to the cytoplasm. The enzyme catalyses (S)-2,3,4,5-tetrahydrodipicolinate + NAD(+) + H2O = (2S,4S)-4-hydroxy-2,3,4,5-tetrahydrodipicolinate + NADH + H(+). The catalysed reaction is (S)-2,3,4,5-tetrahydrodipicolinate + NADP(+) + H2O = (2S,4S)-4-hydroxy-2,3,4,5-tetrahydrodipicolinate + NADPH + H(+). It functions in the pathway amino-acid biosynthesis; L-lysine biosynthesis via DAP pathway; (S)-tetrahydrodipicolinate from L-aspartate: step 4/4. Its function is as follows. Catalyzes the conversion of 4-hydroxy-tetrahydrodipicolinate (HTPA) to tetrahydrodipicolinate. The chain is 4-hydroxy-tetrahydrodipicolinate reductase from Gloeobacter violaceus (strain ATCC 29082 / PCC 7421).